The sequence spans 62 residues: Photosystem II reaction center protein Z (62 aa).

2 helical membrane-spanning segments follow: residues leucine 8–serine 28 and tryptophan 41–valine 61.

It belongs to the PsbZ family. PSII is composed of 1 copy each of membrane proteins PsbA, PsbB, PsbC, PsbD, PsbE, PsbF, PsbH, PsbI, PsbJ, PsbK, PsbL, PsbM, PsbT, PsbX, PsbY, PsbZ, Psb30/Ycf12, peripheral proteins PsbO, CyanoQ (PsbQ), PsbU, PsbV and a large number of cofactors. It forms dimeric complexes.

The protein resides in the cellular thylakoid membrane. In terms of biological role, may control the interaction of photosystem II (PSII) cores with the light-harvesting antenna, regulates electron flow through the 2 photosystem reaction centers. PSII is a light-driven water plastoquinone oxidoreductase, using light energy to abstract electrons from H(2)O, generating a proton gradient subsequently used for ATP formation. This Acaryochloris marina (strain MBIC 11017) protein is Photosystem II reaction center protein Z.